The following is a 211-amino-acid chain: Minor capsid protein VP2 (211 aa).

Belongs to the norovirus VP2 family. As to quaternary structure, homooligomer. The portal-like structure consists in 12 copies of VP2. Interacts with capsid protein VP1.

It localises to the virion. It is found in the host cytoplasm. Functionally, minor structural protein that forms a portal-like structure at a unique three-fold axis of symmetry, following binding to the host receptor. The channel formed by VP2 may allow the delivery of the viral genome through the host endosomal membrane. The protein is Minor capsid protein VP2 of Homo sapiens (Human).